Consider the following 494-residue polypeptide: WD repeat-containing protein 37 (494 aa).

Positions 1–38 (MPTESGSWAAARQTKQKRKSHSLSIKRTNSSEQDRPGL) are disordered. A compositionally biased stretch (polar residues) spans 22 to 31 (SLSIKRTNSS). 2 WD repeats span residues 154 to 194 (GHRD…CLIK) and 197 to 236 (GHAG…PTPQ). A disordered region spans residues 236-266 (QPTADTSISGEEEVDFSDKDENDGDGDASSD). Over residues 245–263 (GEEEVDFSDKDENDGDGDA) the composition is skewed to acidic residues. WD repeat units follow at residues 279-318 (SHQG…LVHS), 321-360 (GHDQ…IHSV), 365-403 (GHTD…SPIA), 406-445 (RTDS…LARL), and 452-493 (GHRR…LLQE).

It localises to the cytoplasm. Its subcellular location is the nucleus. The protein is WD repeat-containing protein 37 (wdr37) of Xenopus tropicalis (Western clawed frog).